The sequence spans 204 residues: Large ribosomal subunit protein eL15A (204 aa).

Residues 164 to 185 are disordered; it reads LTATGKKSRGINKGHKFNNTKA. A compositionally biased stretch (basic residues) spans 169-185; the sequence is KKSRGINKGHKFNNTKA.

It belongs to the eukaryotic ribosomal protein eL15 family. Component of the large ribosomal subunit (LSU). Mature yeast ribosomes consist of a small (40S) and a large (60S) subunit. The 40S small subunit contains 1 molecule of ribosomal RNA (18S rRNA) and 33 different proteins (encoded by 57 genes). The large 60S subunit contains 3 rRNA molecules (25S, 5.8S and 5S rRNA) and 46 different proteins (encoded by 81 genes).

It is found in the cytoplasm. Functionally, component of the ribosome, a large ribonucleoprotein complex responsible for the synthesis of proteins in the cell. The small ribosomal subunit (SSU) binds messenger RNAs (mRNAs) and translates the encoded message by selecting cognate aminoacyl-transfer RNA (tRNA) molecules. The large subunit (LSU) contains the ribosomal catalytic site termed the peptidyl transferase center (PTC), which catalyzes the formation of peptide bonds, thereby polymerizing the amino acids delivered by tRNAs into a polypeptide chain. The nascent polypeptides leave the ribosome through a tunnel in the LSU and interact with protein factors that function in enzymatic processing, targeting, and the membrane insertion of nascent chains at the exit of the ribosomal tunnel. This Saccharomyces cerevisiae (strain ATCC 204508 / S288c) (Baker's yeast) protein is Large ribosomal subunit protein eL15A.